A 549-amino-acid polypeptide reads, in one-letter code: Cytoplasmic trehalase (549 aa).

Residues arginine 168, 175 to 176, asparagine 212, 221 to 223, 292 to 294, and glycine 324 each bind substrate; these read WD, RSQ, and RDE. Residues aspartate 326 and glutamate 509 each act as proton donor/acceptor in the active site. Glutamate 525 contributes to the substrate binding site.

It belongs to the glycosyl hydrolase 37 family. In terms of assembly, monomer.

The protein localises to the cytoplasm. The enzyme catalyses alpha,alpha-trehalose + H2O = alpha-D-glucose + beta-D-glucose. The protein operates within glycan degradation; trehalose degradation; D-glucose from alpha,alpha-trehalose: step 1/1. Hydrolyzes trehalose to glucose. Could be involved, in cells returning to low osmolarity conditions, in the utilization of the accumulated cytoplasmic trehalose, which was synthesized in response to high osmolarity. The polypeptide is Cytoplasmic trehalase (Escherichia coli (strain 55989 / EAEC)).